Reading from the N-terminus, the 206-residue chain is Small ribosomal subunit protein uS4 (206 aa).

Residues 96–158 (SRLDNVVYRM…AKKQLRIQNA (63 aa)) enclose the S4 RNA-binding domain.

It belongs to the universal ribosomal protein uS4 family. Part of the 30S ribosomal subunit. Contacts protein S5. The interaction surface between S4 and S5 is involved in control of translational fidelity.

In terms of biological role, one of the primary rRNA binding proteins, it binds directly to 16S rRNA where it nucleates assembly of the body of the 30S subunit. Its function is as follows. With S5 and S12 plays an important role in translational accuracy. The protein is Small ribosomal subunit protein uS4 of Francisella tularensis subsp. tularensis (strain FSC 198).